Reading from the N-terminus, the 175-residue chain is UPF0178 protein GOX1710 (175 aa).

Belongs to the UPF0178 family.

This is UPF0178 protein GOX1710 from Gluconobacter oxydans (strain 621H) (Gluconobacter suboxydans).